Consider the following 367-residue polypeptide: Aflatoxin B1 aldehyde reductase member 2 (367 aa).

Residues 1–46 constitute a mitochondrion transit peptide; sequence MLRAVSRAVSRAAVRCAWRSGPSVARPLAMSRSPAPRAVSGAPLRP. A disordered region spans residues 27 to 46; that stretch reads PLAMSRSPAPRAVSGAPLRP. Phosphoserine is present on Ser40. Thr48 bears the Phosphothreonine mark. Asp80 lines the NADP(+) pocket. The active-site Proton donor is Tyr85. At Lys136 the chain carries N6-acetyllysine. His149 contributes to the substrate binding site. Residues 179–180, Gln205, 234–244, and Arg258 each bind NADP(+); these read SN and NPLAGGLLTGK. Residue Lys244 is modified to N6-succinyllysine. Position 263 is a phosphoserine (Ser263). Substrate is bound by residues Tyr268 and Arg271. 326–334 serves as a coordination point for NADP(+); it reads SSLEQLEQN. A substrate-binding site is contributed by Arg367.

Belongs to the aldo/keto reductase family. Aldo/keto reductase 2 subfamily. Homodimer. Heterodimer with AKR7A1.

It is found in the mitochondrion. The protein localises to the golgi apparatus. Its subcellular location is the golgi stack. It localises to the cytoplasm. The enzyme catalyses 4-hydroxybutanoate + NADP(+) = succinate semialdehyde + NADPH + H(+). Catalyzes the NADPH-dependent reduction of succinic semialdehyde to gamma-hydroxybutyrate. May have an important role in producing the neuromodulator gamma-hydroxybutyrate (GHB). Has broad substrate specificity. Can reduce the dialdehyde protein-binding form of aflatoxin B1 (AFB1) to the non-binding AFB1 dialcohol. Acts as a 2-carboxybenzaldehyde reductase. This Rattus norvegicus (Rat) protein is Aflatoxin B1 aldehyde reductase member 2 (Akr7a2).